The following is an 874-amino-acid chain: Eukaryotic translation initiation factor 3 subunit C (874 aa).

Positions 1-70 are disordered; it reads MSRFFVSGYT…DGRPSGPAYF (70 aa). Over residues 14–61 the composition is skewed to acidic residues; the sequence is SSEEEDLLSTSEEELLSSSDEGEDNESDSSFFGEDDDESEESSSDDED. One can recognise a PCI domain in the interval 598 to 774; that stretch reads FHQHINLELL…KFISFTSTTE (177 aa). The disordered stretch occupies residues 797–874; it reads KNEKTQSNGY…SNNDEFQATA (78 aa). Residues 813–848 show a composition bias toward low complexity; it reads KDQQNQQQQNQNQNQQQQQNQQQQQQQQSSQQQSNN. The segment covering 862 to 874 has biased composition (polar residues); that stretch reads NVNSNNDEFQATA.

Belongs to the eIF-3 subunit C family. As to quaternary structure, component of the eukaryotic translation initiation factor 3 (eIF-3) complex.

The protein resides in the cytoplasm. In terms of biological role, component of the eukaryotic translation initiation factor 3 (eIF-3) complex, which is involved in protein synthesis of a specialized repertoire of mRNAs and, together with other initiation factors, stimulates binding of mRNA and methionyl-tRNAi to the 40S ribosome. The eIF-3 complex specifically targets and initiates translation of a subset of mRNAs involved in cell proliferation. The polypeptide is Eukaryotic translation initiation factor 3 subunit C (Candida albicans (strain SC5314 / ATCC MYA-2876) (Yeast)).